Consider the following 113-residue polypeptide: MLLELIPLLGIHFVLRTARAQSVTQPDIHITVSEGASLELRCNYSYGATPYLFWYVQSPGQGLQLLLKYFSGDTLVQGIKGFEAEFKRSQSSFNLRKPSVHWSDAAEYFCAVG.

The first 20 residues, M1–A20, serve as a signal peptide directing secretion. An Ig-like domain is found at Q21 to G113. C42 and C110 form a disulfide bridge. An N-linked (GlcNAc...) asparagine glycan is attached at N43.

Alpha-beta TR is a heterodimer composed of an alpha and beta chain; disulfide-linked. The alpha-beta TR is associated with the transmembrane signaling CD3 coreceptor proteins to form the TR-CD3 (TcR or TCR). The assembly of alpha-beta TR heterodimers with CD3 occurs in the endoplasmic reticulum where a single alpha-beta TR heterodimer associates with one CD3D-CD3E heterodimer, one CD3G-CD3E heterodimer and one CD247 homodimer forming a stable octameric structure. CD3D-CD3E and CD3G-CD3E heterodimers preferentially associate with TR alpha and TR beta chains, respectively. The association of the CD247 homodimer is the last step of TcR assembly in the endoplasmic reticulum and is required for transport to the cell surface.

The protein localises to the cell membrane. Its function is as follows. V region of the variable domain of T cell receptor (TR) alpha chain that participates in the antigen recognition. Alpha-beta T cell receptors are antigen specific receptors which are essential to the immune response and are present on the cell surface of T lymphocytes. Recognize peptide-major histocompatibility (MH) (pMH) complexes that are displayed by antigen presenting cells (APC), a prerequisite for efficient T cell adaptive immunity against pathogens. Binding of alpha-beta TR to pMH complex initiates TR-CD3 clustering on the cell surface and intracellular activation of LCK that phosphorylates the ITAM motifs of CD3G, CD3D, CD3E and CD247 enabling the recruitment of ZAP70. In turn ZAP70 phosphorylates LAT, which recruits numerous signaling molecules to form the LAT signalosome. The LAT signalosome propagates signal branching to three major signaling pathways, the calcium, the mitogen-activated protein kinase (MAPK) kinase and the nuclear factor NF-kappa-B (NF-kB) pathways, leading to the mobilization of transcription factors that are critical for gene expression and essential for T cell growth and differentiation. The T cell repertoire is generated in the thymus, by V-(D)-J rearrangement. This repertoire is then shaped by intrathymic selection events to generate a peripheral T cell pool of self-MH restricted, non-autoaggressive T cells. Post-thymic interaction of alpha-beta TR with the pMH complexes shapes TR structural and functional avidity. This is T cell receptor alpha variable 8-3 from Homo sapiens (Human).